The chain runs to 414 residues: Alanine--glyoxylate aminotransferase (414 aa).

The N-terminal 23 residues, 1–23 (MFRMLAKASVTLGSRAAGWVRTM), are a transit peptide targeting the mitochondrion. N6-(pyridoxal phosphate)lysine is present on K231. Position 247 is an N6-acetyllysine; alternate (K247). The residue at position 247 (K247) is an N6-succinyllysine; alternate. At K256 the chain carries N6-acetyllysine. K330 carries the N6-acetyllysine; alternate modification. N6-succinyllysine; alternate is present on K330. The residue at position 334 (K334) is an N6-acetyllysine. Substrate is bound at residue R382. Residues 412–414 (NKL) carry the Microbody targeting signal motif.

It belongs to the class-V pyridoxal-phosphate-dependent aminotransferase family. Homodimer. It depends on pyridoxal 5'-phosphate as a cofactor.

It is found in the peroxisome. It localises to the mitochondrion matrix. It catalyses the reaction L-serine + pyruvate = 3-hydroxypyruvate + L-alanine. The enzyme catalyses glyoxylate + L-alanine = glycine + pyruvate. In terms of biological role, catalyzes the transamination of glyoxylate to glycine and contributes to the glyoxylate detoxification. Functionally, catalyzes the transamination between L-serine and pyruvate and weakly contributes to gluconeogenesis from the L-serine metabolism. This chain is Alanine--glyoxylate aminotransferase, found in Mus musculus (Mouse).